The chain runs to 394 residues: Acetate kinase (394 aa).

Mg(2+) is bound at residue N10. ATP is bound at residue K17. A substrate-binding site is contributed by R87. D144 functions as the Proton donor/acceptor in the catalytic mechanism. ATP contacts are provided by residues 204–208 (HLGNG), 279–281 (DMR), and 327–331 (GIGEN). E381 contacts Mg(2+).

Belongs to the acetokinase family. Homodimer. Mg(2+) serves as cofactor. The cofactor is Mn(2+).

It localises to the cytoplasm. It catalyses the reaction acetate + ATP = acetyl phosphate + ADP. It functions in the pathway metabolic intermediate biosynthesis; acetyl-CoA biosynthesis; acetyl-CoA from acetate: step 1/2. In terms of biological role, catalyzes the formation of acetyl phosphate from acetate and ATP. Can also catalyze the reverse reaction. In Pseudomonas aeruginosa (strain LESB58), this protein is Acetate kinase.